The primary structure comprises 25 residues: Chlorocatechol 1,2-dioxygenase 1 (25 aa).

It belongs to the intradiol ring-cleavage dioxygenase family. Requires Fe(3+) as cofactor.

The enzyme catalyses 3,5-dichlorocatechol + O2 = (2E,4E)-2,4-dichloromuconate + 2 H(+). It participates in xenobiotic degradation; 2-(2,4-dichlorophenoxy)propanoate degradation. This chain is Chlorocatechol 1,2-dioxygenase 1 (tfdC), found in Delftia acidovorans (Pseudomonas acidovorans).